A 567-amino-acid polypeptide reads, in one-letter code: Geraniol synthase, chloroplastic (567 aa).

The transit peptide at 1–63 (MSCARITVTL…GDNSQRKNTR (63 aa)) directs the protein to the chloroplast. The tract at residues 48 to 75 (STPLINGDNSQRKNTRQHMEESSSKRRE) is disordered. A compositionally biased stretch (basic and acidic residues) spans 64 to 75 (QHMEESSSKRRE). Residues Arg-286, Asp-323, Asp-327, Arg-466, and Asp-469 each coordinate (2E)-geranyl diphosphate. Mn(2+) is bound by residues Asp-323 and Asp-327. The DDXXD motif signature appears at 323–327 (DDIFD). Asp-469, Thr-473, and Glu-477 together coordinate Mn(2+).

It belongs to the terpene synthase family. Tpsb subfamily. In terms of assembly, homodimer. It depends on Mn(2+) as a cofactor. In terms of tissue distribution, expressed in the peltate glandular trichomes of the leaves.

It localises to the plastid. The protein localises to the chloroplast. The enzyme catalyses (2E)-geranyl diphosphate + H2O = (2E)-geraniol + diphosphate. It functions in the pathway secondary metabolite biosynthesis; terpenoid biosynthesis. Functionally, monoterpene synthase that catalyzes the formation of geraniol from geranyl diphosphate. This is Geraniol synthase, chloroplastic (GES) from Ocimum basilicum (Sweet basil).